A 589-amino-acid chain; its full sequence is Threonine--tRNA ligase (589 aa).

The segment at aspartate 191–proline 487 is catalytic. Residues cysteine 284, histidine 335, and histidine 464 each contribute to the Zn(2+) site.

Belongs to the class-II aminoacyl-tRNA synthetase family. Homodimer. The cofactor is Zn(2+).

The protein localises to the cytoplasm. The catalysed reaction is tRNA(Thr) + L-threonine + ATP = L-threonyl-tRNA(Thr) + AMP + diphosphate + H(+). Functionally, catalyzes the attachment of threonine to tRNA(Thr) in a two-step reaction: L-threonine is first activated by ATP to form Thr-AMP and then transferred to the acceptor end of tRNA(Thr). Also edits incorrectly charged L-seryl-tRNA(Thr). The chain is Threonine--tRNA ligase from Mycoplasmopsis pulmonis (strain UAB CTIP) (Mycoplasma pulmonis).